Here is a 430-residue protein sequence, read N- to C-terminus: Enolase (430 aa).

Glutamine 168 contacts (2R)-2-phosphoglycerate. Glutamate 210 (proton donor) is an active-site residue. Residues aspartate 247, glutamate 288, and aspartate 315 each contribute to the Mg(2+) site. Positions 340, 369, 370, and 391 each coordinate (2R)-2-phosphoglycerate. The active-site Proton acceptor is the lysine 340.

Belongs to the enolase family. Requires Mg(2+) as cofactor.

It localises to the cytoplasm. The protein localises to the secreted. Its subcellular location is the cell surface. The enzyme catalyses (2R)-2-phosphoglycerate = phosphoenolpyruvate + H2O. It participates in carbohydrate degradation; glycolysis; pyruvate from D-glyceraldehyde 3-phosphate: step 4/5. Its function is as follows. Catalyzes the reversible conversion of 2-phosphoglycerate (2-PG) into phosphoenolpyruvate (PEP). It is essential for the degradation of carbohydrates via glycolysis. The protein is Enolase of Picosynechococcus sp. (strain ATCC 27264 / PCC 7002 / PR-6) (Agmenellum quadruplicatum).